Consider the following 84-residue polypeptide: Xenoxin-1 (84 aa).

Residues 1–18 (MRYAIVFFLVCVITLGEA) form the signal peptide. Cystine bridges form between C21-C42, C35-C55, C61-C76, and C77-C82.

As to expression, expressed by the skin dorsal glands.

It localises to the secreted. Its function is as follows. Lacks alpha-neurotoxic activity, has apparently no antibacterial activity, nor anti-coagulant potency. The chain is Xenoxin-1 (xenoxin-1) from Xenopus laevis (African clawed frog).